Reading from the N-terminus, the 104-residue chain is Small ribosomal subunit protein uS10 (104 aa).

Belongs to the universal ribosomal protein uS10 family. In terms of assembly, part of the 30S ribosomal subunit.

Functionally, involved in the binding of tRNA to the ribosomes. This is Small ribosomal subunit protein uS10 from Xanthomonas oryzae pv. oryzae (strain MAFF 311018).